A 445-amino-acid chain; its full sequence is Argininosuccinate synthase (445 aa).

ATP contacts are provided by residues 17–25 (AFSGGLDTS) and A43. An L-citrulline-binding site is contributed by Y99. Residues G129 and T131 each coordinate ATP. Residues T131, N135, and D136 each coordinate L-aspartate. N135 provides a ligand contact to L-citrulline. An ATP-binding site is contributed by D136. Residues R139 and S192 each contribute to the L-citrulline site. D194 lines the ATP pocket. 3 residues coordinate L-citrulline: T201, E203, and E280.

The protein belongs to the argininosuccinate synthase family. Type 2 subfamily. Homotetramer.

Its subcellular location is the cytoplasm. The enzyme catalyses L-citrulline + L-aspartate + ATP = 2-(N(omega)-L-arginino)succinate + AMP + diphosphate + H(+). The protein operates within amino-acid biosynthesis; L-arginine biosynthesis; L-arginine from L-ornithine and carbamoyl phosphate: step 2/3. This Burkholderia multivorans (strain ATCC 17616 / 249) protein is Argininosuccinate synthase (argG).